The sequence spans 422 residues: SH2 domain-containing protein 4A (422 aa).

A phosphoserine mark is found at Ser117 and Ser123. Disordered stretches follow at residues 141 to 190 (PQNV…EDEK) and 202 to 282 (SEWQ…VIRT). Basic and acidic residues-rich tracts occupy residues 163-190 (TKKD…EDEK) and 212-231 (KAAD…DYKR). Phosphoserine is present on Ser233. Residues 316–408 (WFHGILTLKK…LGKELLLFPC (93 aa)) form the SH2 domain.

In terms of assembly, interacts with ESR1.

The protein resides in the cytoplasm. Inhibits estrogen-induced cell proliferation by competing with PLCG for binding to ESR1, blocking the effect of estrogen on PLCG and repressing estrogen-induced proliferation. May play a role in T-cell development and function. This Rattus norvegicus (Rat) protein is SH2 domain-containing protein 4A (Sh2d4a).